Reading from the N-terminus, the 117-residue chain is Ribonuclease P protein component 4 (117 aa).

Residues Cys-63, Cys-66, Cys-92, and Cys-95 each coordinate Zn(2+).

It belongs to the eukaryotic/archaeal RNase P protein component 4 family. As to quaternary structure, consists of a catalytic RNA component and at least 4 protein subunits. Forms a subcomplex with Rnp1 which stimulates the catalytic RNA. Zn(2+) is required as a cofactor.

The protein resides in the cytoplasm. It catalyses the reaction Endonucleolytic cleavage of RNA, removing 5'-extranucleotides from tRNA precursor.. Its function is as follows. Part of ribonuclease P, a protein complex that generates mature tRNA molecules by cleaving their 5'-ends. The RNA is catalytic, but its KM for pre-tRNA is 170-fold decreased in the presence of the 4 known protein subunits (Rnp1-4). The protein subunits also decrease the amount of Mg(2+) needed for activity. This is Ribonuclease P protein component 4 from Pyrococcus furiosus (strain ATCC 43587 / DSM 3638 / JCM 8422 / Vc1).